The chain runs to 211 residues: Large ribosomal subunit protein uL4 (211 aa).

Residues 42–87 are disordered; sequence AHMRQGTASTLTRSEVRGGGRKPYKQKGTGRARQGSVRTPLRPGGG. Positions 60–71 are enriched in basic residues; sequence GGRKPYKQKGTG.

It belongs to the universal ribosomal protein uL4 family. Part of the 50S ribosomal subunit.

In terms of biological role, one of the primary rRNA binding proteins, this protein initially binds near the 5'-end of the 23S rRNA. It is important during the early stages of 50S assembly. It makes multiple contacts with different domains of the 23S rRNA in the assembled 50S subunit and ribosome. Functionally, forms part of the polypeptide exit tunnel. The sequence is that of Large ribosomal subunit protein uL4 from Synechococcus sp. (strain CC9902).